The primary structure comprises 537 residues: Multidrug resistance protein Stp (537 aa).

Transmembrane regions (helical) follow at residues 6–26, 46–66, 77–97, 104–124, 136–156, 163–183, 200–220, 223–243, 262–282, 300–320, 327–347, 352–372, 397–417, and 478–498; these read LLTL…ALIV, WVVA…ATLA, IGVS…SIAV, AQGL…SAAF, IWTA…GLLV, SIFY…LCYV, LLFI…PQIG, SVQT…FVWL, YALA…MLLL, LMIL…GHLV, VPIL…IFSE, ALVL…LTPI, AIGS…WLSA, and VALL…WRWF.

Belongs to the major facilitator superfamily. EmrB family.

The protein resides in the cell membrane. Contributes to spectinomycin and tetracycline resistance. The polypeptide is Multidrug resistance protein Stp (stp) (Mycobacterium tuberculosis (strain ATCC 25618 / H37Rv)).